The following is a 340-amino-acid chain: Phosphoribosylformylglycinamidine cyclo-ligase (340 aa).

The protein belongs to the AIR synthase family.

It is found in the cytoplasm. It carries out the reaction 2-formamido-N(1)-(5-O-phospho-beta-D-ribosyl)acetamidine + ATP = 5-amino-1-(5-phospho-beta-D-ribosyl)imidazole + ADP + phosphate + H(+). The protein operates within purine metabolism; IMP biosynthesis via de novo pathway; 5-amino-1-(5-phospho-D-ribosyl)imidazole from N(2)-formyl-N(1)-(5-phospho-D-ribosyl)glycinamide: step 2/2. This is Phosphoribosylformylglycinamidine cyclo-ligase from Streptococcus pneumoniae (strain Taiwan19F-14).